A 338-amino-acid polypeptide reads, in one-letter code: Lipoate-protein ligase A (338 aa).

Residues 29 to 216 (PADQRVLFLW…AYCEHYQQQV (188 aa)) form the BPL/LPL catalytic domain. ATP contacts are provided by residues Arg71, 76 to 79 (GAVF), and Lys134. Lys134 contacts (R)-lipoate.

This sequence belongs to the LplA family. As to quaternary structure, monomer.

It localises to the cytoplasm. It catalyses the reaction L-lysyl-[lipoyl-carrier protein] + (R)-lipoate + ATP = N(6)-[(R)-lipoyl]-L-lysyl-[lipoyl-carrier protein] + AMP + diphosphate + H(+). It functions in the pathway protein modification; protein lipoylation via exogenous pathway; protein N(6)-(lipoyl)lysine from lipoate: step 1/2. The protein operates within protein modification; protein lipoylation via exogenous pathway; protein N(6)-(lipoyl)lysine from lipoate: step 2/2. Functionally, catalyzes both the ATP-dependent activation of exogenously supplied lipoate to lipoyl-AMP and the transfer of the activated lipoyl onto the lipoyl domains of lipoate-dependent enzymes. This Vibrio cholerae serotype O1 (strain ATCC 39541 / Classical Ogawa 395 / O395) protein is Lipoate-protein ligase A.